A 58-amino-acid polypeptide reads, in one-letter code: Arabinogalactan protein 21 (58 aa).

An N-terminal signal peptide occupies residues 1–24 (MEAMKMKMMVFIMVVAVAFSAATA). Pro-30, Pro-32, and Pro-34 each carry 4-hydroxyproline. O-linked (Ara...) hydroxyproline glycans are attached at residues Pro-30, Pro-32, and Pro-34. A lipid anchor (GPI-anchor amidated serine) is attached at Ser-36. Positions 37–58 (DAAMFVPALFASVVALASGFIF) are cleaved as a propeptide — removed in mature form.

This sequence belongs to the AG-peptide AGP family. Contains 4-hydroxyproline; hydroxylated on Pro-30, Pro-32 and Pro-34. Post-translationally, O-glycosylated on hydroxyprolines; noncontiguous hydroxylproline residues are glycosylated with arabinogalactan.

Its subcellular location is the cell membrane. In terms of biological role, proteoglycan that seems to be implicated in diverse developmental roles such as differentiation, cell-cell recognition, embryogenesis and programmed cell death. The chain is Arabinogalactan protein 21 from Arabidopsis thaliana (Mouse-ear cress).